A 189-amino-acid polypeptide reads, in one-letter code: MDTEYEQVNKPWNELYKETTLGNKLTVNVGMEDQEVPLLPSNFLTKVRVGLSGGYITMRRIRIKIIPLVSRKAGVSGKLYLRDISDTTGRKLHCTESLDLGREIRLTMQHLDFSVSTRSDVPIVFGFEELVSPFLEGRELFSISVRWQFGLSKNCYSLPQSKWKVMYQEDALKVLRPSKKKASKTDSSV.

This sequence belongs to the tombusvirus/aureusvirus movement protein p22 family. As to quaternary structure, interacts with host protein HFI22. Post-translationally, phosphorylated.

Its subcellular location is the host membrane. Functionally, transports viral genome to neighboring plant cells directly through plasmosdesmata, without any budding. The movement protein allows efficient cell to cell propagation, by bypassing the host cell wall barrier. Displays RNA-binding activity. The polypeptide is Movement protein (Capsicum annuum (Capsicum pepper)).